Consider the following 782-residue polypeptide: Cadherin-5 (782 aa).

The N-terminal stretch at 1–22 is a signal peptide; that stretch reads MQVLVMLLAAAGTYLGLLTAPT. Positions 23–44 are excised as a propeptide; sequence AASNPGRQDTPSTLPLHRRQKR. Cadherin domains lie at 45-148, 149-255, 256-370, 371-475, and 476-592; these read DWIW…WPVF, TQLV…FPVF, TQTR…PPNF, KQPF…DNAP, and EFAK…MGAQ. Residues 45–598 lie on the Extracellular side of the membrane; sequence DWIWNQMHID…MGAQVGVSIQ (554 aa). Glu-55 and Glu-56 together coordinate Ca(2+). The N-linked (GlcNAc...) asparagine glycan is linked to Asn-58. Asp-106, Glu-108, Asp-140, Ile-141, Asn-142, Asp-143, and Asn-144 together coordinate Ca(2+). N-linked (GlcNAc...) asparagine glycosylation occurs at Asn-154. Ca(2+)-binding residues include Asp-174, Asp-176, His-183, and Asp-228. Asn-360, Asn-440, Asn-522, and Asn-534 each carry an N-linked (GlcNAc...) asparagine glycan. Residues 599–619 form a helical membrane-spanning segment; that stretch reads ALVAIFLCILTIAVISLLVYL. A required for interaction with PALS1 region spans residues 620 to 659; that stretch reads RRRLRKQARAHGKSVPEIHEQLVTYDEEGGGEMDTTSYDV. Over 620–782 the chain is Cytoplasmic; that stretch reads RRRLRKQARA…GSDPREELLY (163 aa).

In terms of assembly, part of a complex composed of AMOTL2, MAGI1 and CDH5, within the complex AMOTL2 acts as a scaffold protein for the interaction of MAGI1 with CDH5. The complex is required for coupling actin fibers to cell junctions in endothelial cells. Within the complex AMOTL2 (via its N-terminus) interacts with CDH5. Interacts (via cadherin 5 domain) with PTPRB. Interacts with TRPC4. Interacts with KRIT1. Interacts with PARD3. Interacts with RTN4 (isoform B). Interacts with PALS1; the interaction promotes PALS1 localization to cell junctions and is required for CDH5-mediated vascular lumen formation and endothelial cell. Interacts with CTNND1/p120-catenin; the interaction controls CADH5 endocytosis. In terms of processing, phosphorylated on tyrosine residues by KDR/VEGFR-2. Dephosphorylated by PTPRB. Post-translationally, O-glycosylated.

Its subcellular location is the cell junction. It is found in the adherens junction. The protein resides in the cell membrane. The protein localises to the cytoplasm. Cadherins are calcium-dependent cell adhesion proteins. They preferentially interact with themselves in a homophilic manner in connecting cells; cadherins may thus contribute to the sorting of heterogeneous cell types. This cadherin may play a important role in endothelial cell biology through control of the cohesion and organization of the intercellular junctions. It associates with alpha-catenin forming a link to the cytoskeleton. Plays a role in coupling actin fibers to cell junctions in endothelial cells, via acting as a cell junctional complex anchor for AMOTL2 and MAGI1. Acts in concert with KRIT1 and PALS1 to establish and maintain correct endothelial cell polarity and vascular lumen. These effects are mediated by recruitment and activation of the Par polarity complex and RAP1B. Required for activation of PRKCZ and for localization of phosphorylated PRKCZ, PARD3, TIAM1 and RAP1B to the cell junction. Associates with CTNND1/p120-catenin to control CADH5 endocytosis. In Sus scrofa (Pig), this protein is Cadherin-5.